The primary structure comprises 323 residues: Elongation factor P--(R)-beta-lysine ligase (323 aa).

74-76 (SPE) serves as a coordination point for substrate. ATP contacts are provided by residues 98–100 (RNE) and Asn107. Tyr116 is a binding site for substrate. Position 242–243 (242–243 (EL)) interacts with ATP. Glu249 contributes to the substrate binding site. ATP is bound at residue Gly298.

It belongs to the class-II aminoacyl-tRNA synthetase family. EpmA subfamily. As to quaternary structure, homodimer.

It carries out the reaction D-beta-lysine + L-lysyl-[protein] + ATP = N(6)-((3R)-3,6-diaminohexanoyl)-L-lysyl-[protein] + AMP + diphosphate + H(+). Its function is as follows. With EpmB is involved in the beta-lysylation step of the post-translational modification of translation elongation factor P (EF-P). Catalyzes the ATP-dependent activation of (R)-beta-lysine produced by EpmB, forming a lysyl-adenylate, from which the beta-lysyl moiety is then transferred to the epsilon-amino group of a conserved specific lysine residue in EF-P. This chain is Elongation factor P--(R)-beta-lysine ligase, found in Vibrio campbellii (strain ATCC BAA-1116).